The chain runs to 332 residues: DNA-directed RNA polymerase subunit alpha (332 aa).

Residues 1 to 244 (MKKHAKVYYS…AHLNLLADVE (244 aa)) are alpha N-terminal domain (alpha-NTD). The tract at residues 259 to 332 (IKEEPIRRFS…NYKNENKGEN (74 aa)) is alpha C-terminal domain (alpha-CTD).

Belongs to the RNA polymerase alpha chain family. In terms of assembly, homodimer. The RNAP catalytic core consists of 2 alpha, 1 beta, 1 beta' and 1 omega subunit. When a sigma factor is associated with the core the holoenzyme is formed, which can initiate transcription.

It carries out the reaction RNA(n) + a ribonucleoside 5'-triphosphate = RNA(n+1) + diphosphate. Functionally, DNA-dependent RNA polymerase catalyzes the transcription of DNA into RNA using the four ribonucleoside triphosphates as substrates. This Mesomycoplasma hyopneumoniae (strain 7448) (Mycoplasma hyopneumoniae) protein is DNA-directed RNA polymerase subunit alpha.